A 558-amino-acid chain; its full sequence is Solute carrier family 22 member 6-A (558 aa).

Over 1 to 15 (MSFAELLERTGGMGR) the chain is Cytoplasmic. The helical transmembrane segment at 16–36 (FQITQVALMCFPILLMASHNL) threads the bilayer. Residues 37 to 140 (LQNFSAAIPD…LVCGHKNRRQ (104 aa)) lie on the Extracellular side of the membrane. A helical transmembrane segment spans residues 141–161 (LAQSVYMGGVLVGAIILGGLS). Topologically, residues 162-167 (DRYGRR) are cytoplasmic. Residues 168-188 (ALLIWSYFQMAVSGLCSAFSP) form a helical membrane-spanning segment. Over 189-197 (NYLSYCIFR) the chain is Extracellular. The chain crosses the membrane as a helical span at residues 198–218 (FLTGMALSGIGLNTTALIVEW). The Cytoplasmic portion of the chain corresponds to 219 to 225 (VPTRVRT). A helical membrane pass occupies residues 226–246 (ITGTLAGFSYTVGQLLLAGLA). The Extracellular portion of the chain corresponds to 247 to 253 (YAMRDWR). The chain crosses the membrane as a helical span at residues 254-274 (WLQLCVSLPFFIFFLYSWWFP). At 275-342 (ESARWLVLSG…DLIRTSTIRR (68 aa)) the chain is on the cytoplasmic side. A helical transmembrane segment spans residues 343–363 (ISCALSLVWFSTSFAYYGLAM). Topologically, residues 364–369 (DLQNFN) are extracellular. The chain crosses the membrane as a helical span at residues 370–390 (VSIYLIQVIFGAVDFPAKIFS). The Cytoplasmic segment spans residues 391 to 400 (TTAMIYVGRK). Residues 401-421 (FTQLMSLILGGVVILANSFVP) traverse the membrane as a helical segment. Topologically, residues 422–428 (HEMQTVR) are extracellular. A helical membrane pass occupies residues 429–449 (TGMAVFGKGCLAASFSCVFLY). Residues 450–462 (TTELYPTVIRQSG) are Cytoplasmic-facing. The helical transmembrane segment at 463–483 (LGLCSTMARIGGIVAPLVKIL) threads the bilayer. At 484 to 488 (GEYYP) the chain is on the extracellular side. Residues 489–509 (FLPLVIYGGAPIISGLCVFFL) form a helical membrane-spanning segment. Over 510 to 558 (PETVNKPLPDTIEEVEKRIKAPKKENEMNEIVSLKKKEGMKENPVNDVL) the chain is Cytoplasmic. Over residues 539 to 550 (EIVSLKKKEGMK) the composition is skewed to basic and acidic residues. Residues 539-558 (EIVSLKKKEGMKENPVNDVL) are disordered.

This sequence belongs to the major facilitator (TC 2.A.1) superfamily. Organic cation transporter (TC 2.A.1.19) family. In terms of processing, glycosylated. Glycosylation is necessary for proper targeting of the transporter to the plasma membrane.

Its subcellular location is the cell membrane. The protein resides in the basolateral cell membrane. It is found in the basal cell membrane. Involved in the renal elimination of endogenous and exogenous organic anions. Mediates the sodium-independent uptake of p-aminohippurate (PAH), 2,3-dimercapto-1-propanesulfonic acid (DMPS), cidofovir, adefovir, 9-(2-phosphonylmethoxyethyl) guanine (PMEG), 9-(2-phosphonylmethoxyethyl) diaminopurine (PMEDAP), ochratoxin (OTA), acyclovir (ACV), 3'-azido-3-'deoxythymidine (AZT), cimetidine (CMD), 2,4-dichloro-phenoxyacetate (2,4-D), hippurate (HA), indoleacetate (IA), indoxyl sulfate (IS) and 3-carboxy-4-methyl-5-propyl-2-furanpropionate (CMPF) and edaravone sulfate. PAH uptake is inhibited by p-chloromercuribenzenesulphonate (PCMBS), diethyl pyrocarbonate (DEPC), indomethacin, sulindac, diclofenac, carprofen, okadaic acid, benzothiazolylcysteine (BTC), S-chlorotrifluoroethylcysteine (CTFC), cysteine S-conjugates S-dichlorovinylcysteine (DCVC), furosemide, steviol, phorbol 12-myristate 13-acetate (PMA), calcium ionophore A23187, benzylpenicillin, bumetamide, losartan, probenecid, phenol red, urate, glutarate and alpha-ketoglutarate. In Xenopus laevis (African clawed frog), this protein is Solute carrier family 22 member 6-A (slc22a6-a).